The sequence spans 323 residues: DNA-directed RNA polymerase subunit alpha (323 aa).

Positions 1–225 are alpha N-terminal domain (alpha-NTD); the sequence is MLDIAMPKIE…QYSQTIADFN (225 aa). Residues 243–323 form an alpha C-terminal domain (alpha-CTD) region; that stretch reads PADIYDTPIE…TNSSPAGIES (81 aa).

This sequence belongs to the RNA polymerase alpha chain family. In terms of assembly, homodimer. The RNAP catalytic core consists of 2 alpha, 1 beta, 1 beta' and 1 omega subunit. When a sigma factor is associated with the core the holoenzyme is formed, which can initiate transcription.

The enzyme catalyses RNA(n) + a ribonucleoside 5'-triphosphate = RNA(n+1) + diphosphate. DNA-dependent RNA polymerase catalyzes the transcription of DNA into RNA using the four ribonucleoside triphosphates as substrates. This is DNA-directed RNA polymerase subunit alpha from Roseiflexus castenholzii (strain DSM 13941 / HLO8).